The sequence spans 57 residues: uncharacterized protein (57 aa).

This is an uncharacterized protein from Ureaplasma parvum serovar 3 (strain ATCC 700970).